The sequence spans 381 residues: Chorismate synthase (381 aa).

NADP(+)-binding residues include R39 and R45. Residues 127–129, 248–249, G293, 308–312, and R334 each bind FMN; these read RAS, QS, and KPIPT.

It belongs to the chorismate synthase family. As to quaternary structure, homotetramer. It depends on FMNH2 as a cofactor.

The enzyme catalyses 5-O-(1-carboxyvinyl)-3-phosphoshikimate = chorismate + phosphate. Its pathway is metabolic intermediate biosynthesis; chorismate biosynthesis; chorismate from D-erythrose 4-phosphate and phosphoenolpyruvate: step 7/7. Its function is as follows. Catalyzes the anti-1,4-elimination of the C-3 phosphate and the C-6 proR hydrogen from 5-enolpyruvylshikimate-3-phosphate (EPSP) to yield chorismate, which is the branch point compound that serves as the starting substrate for the three terminal pathways of aromatic amino acid biosynthesis. This reaction introduces a second double bond into the aromatic ring system. This Caldicellulosiruptor saccharolyticus (strain ATCC 43494 / DSM 8903 / Tp8T 6331) protein is Chorismate synthase.